Consider the following 927-residue polypeptide: Solute carrier family 12 protein B0303.11 (927 aa).

Over 1–23 the chain is Cytoplasmic; that stretch reads MPSSTASSEDAPITSTAWMNWKD. Residues 24–44 traverse the membrane as a helical segment; sequence VFLKCVQPMLAVVLLLRFSSI. Over 45–53 the chain is Extracellular; the sequence is VDEAGFTTT. A helical membrane pass occupies residues 54–74; it reads IILVFFTFLVSLVTGWSACTV. The Cytoplasmic segment spans residues 75 to 95; the sequence is VSRKSSEVGFVKTMLAYSSTE. The helical transmembrane segment at 96–116 threads the bilayer; sequence FAISFSIIYLFCLLVATSTFL. Over 117–141 the chain is Extracellular; the sequence is TSAAEAVLHIFSTFSLELLDGATHD. A helical membrane pass occupies residues 142-159; that stretch reads LRLVSSVLSLITLALCMV. Residues 160–165 are Cytoplasmic-facing; sequence RNRNAR. A helical membrane pass occupies residues 166–186; the sequence is FVRTFIFALTCIAIALQLSSV. The Extracellular segment spans residues 187–212; it reads MFRYGEYQLRRVSDRNAMIPSPPNEE. The helical transmembrane segment at 213 to 233 threads the bilayer; that stretch reads ISTIFAQLFPAAMCGLTILNI. Residues 234–244 are Cytoplasmic-facing; the sequence is GSKLQNTAPRG. The chain crosses the membrane as a helical span at residues 245–265; it reads ALIAIAVSACFYGAAAMLDYV. The Extracellular segment spans residues 266 to 284; that stretch reads EFFARTSTSNSTGSAEYNE. A glycan (N-linked (GlcNAc...) asparagine) is linked at Asn275. The chain crosses the membrane as a helical span at residues 285–305; it reads FLSYIYTTVPMAIVITLACVL. At 306 to 345 the chain is on the cytoplasmic side; sequence SAVSTLKYAAVILQSLGRSNQCRCILWLAKGFGERDIPIR. Residues 346–366 traverse the membrane as a helical segment; the sequence is CLLLLSTVQILVSAIGSYDIL. A topological domain (extracellular) is located at residue Cys367. The helical transmembrane segment at 368-388 threads the bilayer; sequence IPTTVFYLFAYALFNFYVFLV. At 389 to 394 the chain is on the cytoplasmic side; sequence KLSDPE. The helical transmembrane segment at 395–415 threads the bilayer; the sequence is IPSPPTLLSLAISAACFIASL. Residues 416–419 lie on the Extracellular side of the membrane; the sequence is YTNR. The helical transmembrane segment at 420-440 threads the bilayer; the sequence is HLALFIASIFAISYCSLLYII. Residues 441–927 are Cytoplasmic-facing; that stretch reads RRERNEDGEE…SMSALRLKFP (487 aa).

It belongs to the SLC12A transporter family.

The protein localises to the cell membrane. The polypeptide is Solute carrier family 12 protein B0303.11 (Caenorhabditis elegans).